A 448-amino-acid chain; its full sequence is Probable D-serine dehydratase (448 aa).

Lys-119 bears the N6-(pyridoxal phosphate)lysine mark.

Belongs to the serine/threonine dehydratase family. DsdA subfamily. Requires pyridoxal 5'-phosphate as cofactor.

It carries out the reaction D-serine = pyruvate + NH4(+). The polypeptide is Probable D-serine dehydratase (Chromobacterium violaceum (strain ATCC 12472 / DSM 30191 / JCM 1249 / CCUG 213 / NBRC 12614 / NCIMB 9131 / NCTC 9757 / MK)).